The chain runs to 296 residues: Carboxylesterase YbfK (296 aa).

Active-site charge relay system residues include serine 129, glutamate 244, and histidine 273.

The protein belongs to the AB hydrolase superfamily.

It is found in the cytoplasm. It catalyses the reaction a carboxylic ester + H2O = an alcohol + a carboxylate + H(+). In terms of biological role, shows carboxylesterase activity in vitro. In Bacillus subtilis (strain 168), this protein is Carboxylesterase YbfK (ybfK).